Reading from the N-terminus, the 601-residue chain is Elongation factor 4 (601 aa).

Positions Ser6 to Glu188 constitute a tr-type G domain. Residues Asp18 to Thr23 and Asn135 to Asp138 each bind GTP.

Belongs to the TRAFAC class translation factor GTPase superfamily. Classic translation factor GTPase family. LepA subfamily.

The protein localises to the cell inner membrane. The catalysed reaction is GTP + H2O = GDP + phosphate + H(+). Required for accurate and efficient protein synthesis under certain stress conditions. May act as a fidelity factor of the translation reaction, by catalyzing a one-codon backward translocation of tRNAs on improperly translocated ribosomes. Back-translocation proceeds from a post-translocation (POST) complex to a pre-translocation (PRE) complex, thus giving elongation factor G a second chance to translocate the tRNAs correctly. Binds to ribosomes in a GTP-dependent manner. The polypeptide is Elongation factor 4 (Anaeromyxobacter sp. (strain K)).